A 335-amino-acid polypeptide reads, in one-letter code: Biotin synthase (335 aa).

One can recognise a Radical SAM core domain in the interval 50–279; the sequence is ADIQRAALLS…KARVRLSAGR (230 aa). Positions 65, 69, and 72 each coordinate [4Fe-4S] cluster. [2Fe-2S] cluster is bound by residues Cys-110, Cys-142, Cys-202, and Arg-274.

Belongs to the radical SAM superfamily. Biotin synthase family. In terms of assembly, homodimer. [4Fe-4S] cluster is required as a cofactor. The cofactor is [2Fe-2S] cluster.

The enzyme catalyses (4R,5S)-dethiobiotin + (sulfur carrier)-SH + 2 reduced [2Fe-2S]-[ferredoxin] + 2 S-adenosyl-L-methionine = (sulfur carrier)-H + biotin + 2 5'-deoxyadenosine + 2 L-methionine + 2 oxidized [2Fe-2S]-[ferredoxin]. It functions in the pathway cofactor biosynthesis; biotin biosynthesis; biotin from 7,8-diaminononanoate: step 2/2. In terms of biological role, catalyzes the conversion of dethiobiotin (DTB) to biotin by the insertion of a sulfur atom into dethiobiotin via a radical-based mechanism. This chain is Biotin synthase, found in Methylorubrum extorquens (strain CM4 / NCIMB 13688) (Methylobacterium extorquens).